Here is a 363-residue protein sequence, read N- to C-terminus: Cyclin-D1-1 (363 aa).

Residues 39–77 (ELEREGEPAQGSSPSSSLSCAAAAAAAADDDDEDEDEHG) form a disordered region. Over residues 50–65 (SSPSSSLSCAAAAAAA) the composition is skewed to low complexity. Acidic residues predominate over residues 66 to 75 (ADDDDEDEDE).

Belongs to the cyclin family. Cyclin D subfamily.

In Oryza sativa subsp. japonica (Rice), this protein is Cyclin-D1-1 (CYCD1-1).